Consider the following 462-residue polypeptide: Argininosuccinate lyase (462 aa).

The protein belongs to the lyase 1 family. Argininosuccinate lyase subfamily.

The protein resides in the cytoplasm. The enzyme catalyses 2-(N(omega)-L-arginino)succinate = fumarate + L-arginine. The protein operates within amino-acid biosynthesis; L-arginine biosynthesis; L-arginine from L-ornithine and carbamoyl phosphate: step 3/3. The chain is Argininosuccinate lyase from Ehrlichia ruminantium (strain Welgevonden).